Consider the following 116-residue polypeptide: Large ribosomal subunit protein bL19 (116 aa).

This sequence belongs to the bacterial ribosomal protein bL19 family.

Functionally, this protein is located at the 30S-50S ribosomal subunit interface and may play a role in the structure and function of the aminoacyl-tRNA binding site. This Flavobacterium johnsoniae (strain ATCC 17061 / DSM 2064 / JCM 8514 / BCRC 14874 / CCUG 350202 / NBRC 14942 / NCIMB 11054 / UW101) (Cytophaga johnsonae) protein is Large ribosomal subunit protein bL19.